We begin with the raw amino-acid sequence, 303 residues long: Probable cell division protein WhiA (303 aa).

Residues 272-303 (SIQQIADSIEPPLTKSGVNHRLRKINKIADDL) constitute a DNA-binding region (H-T-H motif).

This sequence belongs to the WhiA family.

In terms of biological role, involved in cell division and chromosome segregation. This chain is Probable cell division protein WhiA, found in Streptococcus thermophilus (strain ATCC BAA-250 / LMG 18311).